The chain runs to 259 residues: Truncated Ankyrin repeat protein OPG003 (259 aa).

The protein belongs to the orthopoxvirus OPG003 family.

The sequence is that of Truncated Ankyrin repeat protein OPG003 (OPG003) from Vaccinia virus (strain Copenhagen) (VACV).